The primary structure comprises 512 residues: Apolipoprotein N-acyltransferase (512 aa).

Helical transmembrane passes span 5–25 (LDKYWQHPALYWPLLILFAAA), 56–76 (FAVSSAYLFGLTAYTTQFYWI), 92–112 (VPLTFLLPAYLALYPALCFWL), 118–138 (LPRGIKIGLVLPILWTLTEFA), 168–188 (LGGIHMVTLATAFLGVWLVLA), and 195–215 (SGKRLLPIILIAALLAAGYTA). The CN hydrolase domain occupies 233–477 (LQGNIDQTLK…ETVLEGHIKG (245 aa)). The active-site Proton acceptor is Glu271. Lys337 is a catalytic residue. Cys389 serves as the catalytic Nucleophile. Residues 487 to 507 (TGSSWWLMGILALAALILFIF) traverse the membrane as a helical segment.

It belongs to the CN hydrolase family. Apolipoprotein N-acyltransferase subfamily.

The protein resides in the cell inner membrane. The enzyme catalyses N-terminal S-1,2-diacyl-sn-glyceryl-L-cysteinyl-[lipoprotein] + a glycerophospholipid = N-acyl-S-1,2-diacyl-sn-glyceryl-L-cysteinyl-[lipoprotein] + a 2-acyl-sn-glycero-3-phospholipid + H(+). Its pathway is protein modification; lipoprotein biosynthesis (N-acyl transfer). In terms of biological role, catalyzes the phospholipid dependent N-acylation of the N-terminal cysteine of apolipoprotein, the last step in lipoprotein maturation. In Neisseria meningitidis serogroup B (strain ATCC BAA-335 / MC58), this protein is Apolipoprotein N-acyltransferase.